Consider the following 96-residue polypeptide: Neurotoxin beta-KTx 31.1 (96 aa).

An N-terminal signal peptide occupies residues Met1 to Cys21. A propeptide spanning residues Gly22 to Gln29 is cleaved from the precursor. One can recognise a BetaSPN-type CS-alpha/beta domain in the interval Gln56–Tyr93. Intrachain disulfides connect Cys59–Cys80, Cys66–Cys85, and Cys70–Cys87.

Belongs to the long chain scorpion toxin family. Class 1 subfamily. As to expression, expressed by the venom gland.

The protein resides in the secreted. Its function is as follows. Inhibits voltage-gated potassium channel. This chain is Neurotoxin beta-KTx 31.1, found in Lychas mucronatus (Chinese swimming scorpion).